A 266-amino-acid chain; its full sequence is Eukaryotic translation initiation factor 3 subunit J (266 aa).

Disordered regions lie at residues 1-142 (MAPS…VSDS) and 215-243 (MSNE…VSLV). The segment covering 26–44 (DEEEEDVLDSWDAAEDSEV) has biased composition (acidic residues). Residues 40–99 (EDSEVEREKAAKAAEAKAKAEAEAAAKKKSKAQRIQEHKEERKKREEEDSSSESEEDEAE) adopt a coiled-coil conformation. 2 stretches are compositionally biased toward basic and acidic residues: residues 45–65 (EREK…EAAA) and 73–86 (RIQE…KREE). The span at 87-97 (EDSSSESEEDE) shows a compositional bias: acidic residues. Basic and acidic residues-rich tracts occupy residues 98–118 (AERR…HAED) and 218–230 (EKMR…DKGN).

This sequence belongs to the eIF-3 subunit J family. In terms of assembly, component of the eukaryotic translation initiation factor 3 (eIF-3) complex.

It is found in the cytoplasm. Component of the eukaryotic translation initiation factor 3 (eIF-3) complex, which is involved in protein synthesis of a specialized repertoire of mRNAs and, together with other initiation factors, stimulates binding of mRNA and methionyl-tRNAi to the 40S ribosome. The eIF-3 complex specifically targets and initiates translation of a subset of mRNAs involved in cell proliferation. In Aspergillus terreus (strain NIH 2624 / FGSC A1156), this protein is Eukaryotic translation initiation factor 3 subunit J (hcr1).